The primary structure comprises 107 residues: ATP-dependent Clp protease adapter protein ClpS (107 aa).

The segment covering 1-12 (MSGDKDFDKDSD) has biased composition (basic and acidic residues). The disordered stretch occupies residues 1-21 (MSGDKDFDKDSDVTVITRTTP).

Belongs to the ClpS family. In terms of assembly, binds to the N-terminal domain of the chaperone ClpA.

In terms of biological role, involved in the modulation of the specificity of the ClpAP-mediated ATP-dependent protein degradation. In Zymomonas mobilis subsp. mobilis (strain ATCC 31821 / ZM4 / CP4), this protein is ATP-dependent Clp protease adapter protein ClpS.